We begin with the raw amino-acid sequence, 338 residues long: Phosphate acyltransferase (338 aa).

This sequence belongs to the PlsX family. Homodimer. Probably interacts with PlsY.

It localises to the cytoplasm. The catalysed reaction is a fatty acyl-[ACP] + phosphate = an acyl phosphate + holo-[ACP]. Its pathway is lipid metabolism; phospholipid metabolism. Functionally, catalyzes the reversible formation of acyl-phosphate (acyl-PO(4)) from acyl-[acyl-carrier-protein] (acyl-ACP). This enzyme utilizes acyl-ACP as fatty acyl donor, but not acyl-CoA. The polypeptide is Phosphate acyltransferase (Alcanivorax borkumensis (strain ATCC 700651 / DSM 11573 / NCIMB 13689 / SK2)).